We begin with the raw amino-acid sequence, 395 residues long: Probable hercynylcysteine sulfoxide lyase (395 aa).

Residues 1–21 (MQDEAMRRSGANSPAGDSLAD) are disordered. The residue at position 220 (Lys220) is an N6-(pyridoxal phosphate)lysine.

The protein belongs to the class-V pyridoxal-phosphate-dependent aminotransferase family. EgtE subfamily. The cofactor is pyridoxal 5'-phosphate.

It catalyses the reaction S-(hercyn-2-yl)-L-cysteine S-oxide + AH2 + H(+) = ergothioneine + pyruvate + A + NH4(+). The protein operates within amino-acid biosynthesis; ergothioneine biosynthesis. In terms of biological role, probably catalyzes the conversion of hercynylcysteine sulfoxide to ergothioneine. ERG is one of the major redox buffers which protects bacteria against redox stressors and antibiotics; loss of ERG or mycothiol (MSH, the other major redox buffer in this bacteria) leads to respiratory alterations and bioenergetic deficiencies that negatively impact virulence. The sequence is that of Probable hercynylcysteine sulfoxide lyase from Mycobacterium tuberculosis (strain CDC 1551 / Oshkosh).